The sequence spans 391 residues: MGVVYGSQQNLSEYFYSSVNMAEVPDTFEENRGHSFEGVTLQRRHVKGMKSYGSDITPRRPKQLGLPKEVNTSECIDQGSWRKPSAFESLRSYSRKFSKRIFSFIGVESKSTVQRNASGADSTSLSHFTANEINKGNCKKTALSNEFNSANKGSKASGVGAELPSVNGFIEGELHDDNETDSFRINELAKQIQETSLGATTQEDESSDGICWDELSTTSPESSKVSEPIIQDNTQTTHINNDSSDIRFSSRCDLFADDADSDWEQDFNVKFDSPLIIPETVNSAGHTVREQLFEVKEFTRSIKDLKDLYEKANSKDIYDKDSEILGEAKAILRLADPANYSDLKDEDAQNILSKYKVKLEGDSSLDFDASMLPGLNDHVHYLMSQLQLLLH.

The tract at residues 49–68 (MKSYGSDITPRRPKQLGLPK) is disordered.

Functionally, involved in septation. The polypeptide is Septation protein etd1 (etd1) (Schizosaccharomyces pombe (strain 972 / ATCC 24843) (Fission yeast)).